The primary structure comprises 407 residues: Keratin, type I cuticular Ha2 (407 aa).

The segment at 1–55 is head; that stretch reads MPSVCMPTTYRPASCLSKTYLSSSCQPSNRRPTGCISSSMGTYGLFCEGAFNGNE. The IF rod domain occupies 55-366; that stretch reads EKETMQVLND…GLLESEDSKL (312 aa). Residues 56 to 90 form a coil 1A region; sequence KETMQVLNDRLANYLEKVRQLEKENAELEGKIQDV. Positions 91 to 101 are linker 1; that stretch reads YQGQVLTMCPD. Residues 102-202 form a coil 1B region; it reads YQSYFQTIEE…HEEEVGVLRQ (101 aa). The linker 12 stretch occupies residues 203-218; the sequence is QLGDRLNIEVDAAPPV. Residues 219–362 form a coil 2 region; it reads DLTRMLEEMR…DTYRGLLESE (144 aa). Positions 363 to 407 are tail; the sequence is DSKLPCNPCSTPSCQPCAPSPGVSRTVCVPHTVCVPCSPCLQTRY.

It belongs to the intermediate filament family. Cuticle of the hair shaft.

The polypeptide is Keratin, type I cuticular Ha2 (Krt32) (Mus musculus (Mouse)).